Reading from the N-terminus, the 333-residue chain is Glyceraldehyde-3-phosphate dehydrogenase (333 aa).

N-acetylserine is present on serine 1. Residues 10–11, aspartate 31, and serine 118 contribute to the NAD(+) site; that span reads RI. Residues 147–149, threonine 178, 207–208, and arginine 230 each bind D-glyceraldehyde 3-phosphate; these read SCT and TG. The Nucleophile role is filled by cysteine 148. NAD(+) is bound at residue asparagine 312.

The protein belongs to the glyceraldehyde-3-phosphate dehydrogenase family. As to quaternary structure, homotetramer.

It is found in the cytoplasm. It carries out the reaction D-glyceraldehyde 3-phosphate + phosphate + NAD(+) = (2R)-3-phospho-glyceroyl phosphate + NADH + H(+). It participates in carbohydrate degradation; glycolysis; pyruvate from D-glyceraldehyde 3-phosphate: step 1/5. The chain is Glyceraldehyde-3-phosphate dehydrogenase from Homarus americanus (American lobster).